Reading from the N-terminus, the 440-residue chain is Discs overgrown protein kinase (440 aa).

The 269-residue stretch at Tyr9–Phe277 folds into the Protein kinase domain. Residues Ile15–Ile23 and Lys38 each bind ATP. Asp128 (proton acceptor) is an active-site residue. Residues Lys221–Lys224 form a nuclear localization signal; essential for interaction with Bdbt and important for nuclear localization region. Phosphoserine occurs at positions 333 and 334. The disordered stretch occupies residues Ser376–Lys440. The segment covering Gln413 to Lys440 has biased composition (gly residues).

It belongs to the protein kinase superfamily. CK1 Ser/Thr protein kinase family. Casein kinase I subfamily. In terms of assembly, forms a complex with per. Interacts with Dlish. Interacts (via nuclear localization signal) with Bdbt. As to expression, detected in the head (at protein level). Expressed in photoreceptor cells of the eyes as well as in the region situated between the optic lobe and the central brain.

It localises to the nucleus. The protein localises to the cytoplasm. Its subcellular location is the cytosol. It carries out the reaction L-seryl-[protein] + ATP = O-phospho-L-seryl-[protein] + ADP + H(+). It catalyses the reaction L-threonyl-[protein] + ATP = O-phospho-L-threonyl-[protein] + ADP + H(+). Serine/threonine-protein kinase which is involved in the circadian rhythm pathway, viability and planar cell polarity. In the circadian rhythm pathway, phosphorylates the clock gene period (per) and targets it for degradation in the absence of timeless (tim), thus contributing to production of the circadian oscillations of the clock genes. Together with CkIalpha, regulates processing of ci by phosphorylating it, which promotes its binding to slmb, the F-box recognition component of the SCF(slmb) E3 ubiquitin-protein ligase. Involved in the inhibition of apoptosis during cell proliferation and growth arrest in imaginal disks. Also functions in planar cell polarity. The sequence is that of Discs overgrown protein kinase (dco) from Drosophila melanogaster (Fruit fly).